A 132-amino-acid polypeptide reads, in one-letter code: NADPH-dependent 7-cyano-7-deazaguanine reductase (132 aa).

Cys48 acts as the Thioimide intermediate in catalysis. The Proton donor role is filled by Asp55. Substrate is bound by residues 70–72 (LEL) and 89–90 (ME).

Belongs to the GTP cyclohydrolase I family. QueF type 1 subfamily.

Its subcellular location is the cytoplasm. The catalysed reaction is 7-aminomethyl-7-carbaguanine + 2 NADP(+) = 7-cyano-7-deazaguanine + 2 NADPH + 3 H(+). It functions in the pathway tRNA modification; tRNA-queuosine biosynthesis. In terms of biological role, catalyzes the NADPH-dependent reduction of 7-cyano-7-deazaguanine (preQ0) to 7-aminomethyl-7-deazaguanine (preQ1). This is NADPH-dependent 7-cyano-7-deazaguanine reductase from Elusimicrobium minutum (strain Pei191).